Consider the following 856-residue polypeptide: PR domain zinc finger protein 1 (856 aa).

An SET domain is found at 115–233 (PRNLLFKYAA…ANQELLVWYC (119 aa)). Disordered stretches follow at residues 357-399 (THSP…APGL) and 532-571 (GAAA…VMAA). Low complexity-rich tracts occupy residues 373–393 (SSPE…NTVS) and 542–556 (SPPS…AATS). The interaction with PIAS1 stretch occupies residues 558 to 605 (HVVQPKATSSVMAAPSTDGAMNLIKNKRNMTGYKTLPYPLKKQNGKIK). 4 C2H2-type zinc fingers span residues 606-628 (YECN…LRVH), 634-656 (FKCQ…YLVH), 662-684 (HECQ…LRLH), and 690-712 (YQCK…KRLH). Residue Lys847 forms a Glycyl lysine isopeptide (Lys-Gly) (interchain with G-Cter in SUMO1); alternate linkage. A Glycyl lysine isopeptide (Lys-Gly) (interchain with G-Cter in SUMO2); alternate cross-link involves residue Lys847.

This sequence belongs to the class V-like SAM-binding methyltransferase superfamily. Interacts with PRMT5. Interacts with FBXO10. Interacts with FBXO11. Interacts with multiple nuclear sumoylation E3 ligases, including CBX4, PIAS1, PIAS2, PIAS3, PIAS4, PML and RNF4, but not RANBP2. Interacts with LDB1, SMARCD3 and SMARCC1. Interacts with EEIG1; following TNFSF11/RANKL stimulation in bone marrow-derived macrophages, the interaction promotes the binding of PRDM1/BLIMP1 to the gene promoter of IRF8. Post-translationally, sumoylation at Lys-847 by PIAS1 increases transcriptional repressor activity, and is critical for plasma cell differentiation. Can be sumoylated with SUMO1 and SUMO2 by PML. Degradation of the wild-type protein mostly depends upon sumoylation, rather than ubiquitination. Desumoylated by SENP1 and SENP6. In terms of processing, ubiquitinated by SCF(FBXO11), leading to its degradation by the proteasome. As to expression, expressed in bone marrow macrophages (at protein level). Expressed in innate lymphocytes, including tissue-resident conventional natural killer (cNK) cells in liver. Expressed also weakly in tissue-resident natural killer (trNK) and natural killer T (NKT) cells in liver. In terms of tissue distribution, expressed in bone marrow, spleen and lymph node but not in brain, heart, kidney, liver, ovary or muscle. Weak expression detected in the lung. Expressed only in the yolk sac. As to expression, expressed in embryo, yolk sac, placenta, splenocytes, and activated T-cells.

It is found in the nucleus. It localises to the cytoplasm. In terms of biological role, transcription factor that mediates a transcriptional program in various innate and adaptive immune tissue-resident lymphocyte T cell types such as tissue-resident memory T (Trm), natural killer (trNK) and natural killer T (NKT) cells and negatively regulates gene expression of proteins that promote the egress of tissue-resident T-cell populations from non-lymphoid organs. Plays a role in the development, retention and long-term establishment of adaptive and innate tissue-resident lymphocyte T cell types in non-lymphoid organs, such as the skin and gut, but also in other nonbarrier tissues like liver and kidney, and therefore may provide immediate immunological protection against reactivating infections or viral reinfection. Binds specifically to the PRDI element in the promoter of the beta-interferon gene. Drives the maturation of B-lymphocytes into Ig secreting cells. Associates with the transcriptional repressor ZNF683 to chromatin at gene promoter regions. Binds to the promoter and acts as a transcriptional repressor of IRF8, thereby promotes transcription of osteoclast differentiation factors such as NFATC1 and EEIG1. This is PR domain zinc finger protein 1 (Prdm1) from Mus musculus (Mouse).